A 256-amino-acid polypeptide reads, in one-letter code: uncharacterized protein (256 aa).

The interval 211 to 256 (RKLQASVTTTPPKRCKLADRPAQTTQDTPRAPQPAPVRAQRPLFTL) is disordered. Residues 246–256 (PVRAQRPLFTL) show a composition bias toward low complexity.

This is an uncharacterized protein from Orgyia pseudotsugata (Douglas-fir tussock moth).